The primary structure comprises 269 residues: Phosphate import ATP-binding protein PstB 1 (269 aa).

Residues 25–264 (LSTEDLHVFY…PQVDLTNDYI (240 aa)) form the ABC transporter domain. 57-64 (GPSGSGKS) contacts ATP.

The protein belongs to the ABC transporter superfamily. Phosphate importer (TC 3.A.1.7) family. In terms of assembly, the complex is composed of two ATP-binding proteins (PstB), two transmembrane proteins (PstC and PstA) and a solute-binding protein (PstS).

It is found in the cell membrane. It catalyses the reaction phosphate(out) + ATP + H2O = ADP + 2 phosphate(in) + H(+). In terms of biological role, part of the ABC transporter complex PstSACB involved in phosphate import. Responsible for energy coupling to the transport system. In Lactiplantibacillus plantarum (strain ATCC BAA-793 / NCIMB 8826 / WCFS1) (Lactobacillus plantarum), this protein is Phosphate import ATP-binding protein PstB 1.